The following is a 92-amino-acid chain: Small ribosomal subunit protein uS19 (92 aa).

The protein belongs to the universal ribosomal protein uS19 family.

Protein S19 forms a complex with S13 that binds strongly to the 16S ribosomal RNA. The polypeptide is Small ribosomal subunit protein uS19 (Trichlorobacter lovleyi (strain ATCC BAA-1151 / DSM 17278 / SZ) (Geobacter lovleyi)).